An 80-amino-acid polypeptide reads, in one-letter code: Penaeidin-3 (80 aa).

An N-terminal signal peptide occupies residues Met-1 to Gly-19. A Pyrrolidone carboxylic acid modification is found at Gln-20. 3 disulfide bridges follow: Cys-54–Cys-67, Cys-57–Cys-74, and Cys-68–Cys-75.

The protein belongs to the penaeidin family. In terms of processing, the N-terminus forms pyrrolidone carboxylic acid. Strongly expressed in hemocytes, and to a lesser extent in heart, muscle, gills, intestine and eyestalk. Lowest expression in hepatopancreas.

Its subcellular location is the cytoplasmic granule. Antibacterial and antifungal activity. Presents chitin-binding activity. The protein is Penaeidin-3 of Penaeus indicus (Indian white prawn).